Here is a 474-residue protein sequence, read N- to C-terminus: MATSWGSILQDEKQLEELAKQAIDRALAEGVLLRSAQHPSSSDVVTYAPFTLFPSPVPSALLEQAYAVQMDFNILVDAVSQNPAFLEQTLSSTIKKDDYTARLFDIYKQVLKEGIAQTVFLGLNRSDYMFQCGADGSKALKQIEINTISASFGGLASRTPAVHRHVLNVLNKTKEASKILSNNPSKGLALGIAKAWELYGSANAVVLLIAQEKERNIFDQRAVENELLDRKIHVIRGRFEDVSERGSLDQNRRLFMDDQEVAVVYFRDGYMPSQYNSQNWEARLMLERSRAAKCPDIAIQLAGTKKVQQELSRVGLLEALLPGQPEAVARLRATFAGLYSLDMGEEGDQAIAEALAAPSHFVLKPQREGGGNNLYGEEMVQALEQLKDSEERASYILMEKIEPEPFRNCLLRPGSPAQVVQCISELGIFGVYVRQGTTLVMNKHVGHLLRTKAVEHADGGVAAGVAVLDNPYPV.

Residue alanine 2 is modified to N-acetylalanine. Arginine 125 lines the substrate pocket. Residue glutamate 144 participates in ATP binding. Mg(2+) is bound by residues glutamate 144 and asparagine 146. Substrate is bound by residues 148–151, 214–216, glutamine 220, and 267–270; these read ISAS, ERN, and RDGY. ATP-binding positions include lysine 305, 364-373, tyrosine 375, and 398-401; these read KPQREGGGNN and MEKI. Residue glutamate 368 coordinates Mg(2+). The residue at position 415 (serine 415) is a Phosphoserine. Glutamate 425 serves as a coordination point for ATP. Arginine 450 contributes to the substrate binding site. Lysine 452 and aspartate 458 together coordinate ATP. 461 to 462 serves as a coordination point for substrate; it reads VA.

The protein belongs to the eukaryotic GSH synthase family. In terms of assembly, homodimer. Mg(2+) is required as a cofactor.

It catalyses the reaction gamma-L-glutamyl-L-cysteine + glycine + ATP = glutathione + ADP + phosphate + H(+). It carries out the reaction gamma-L-glutamyl-(2S)-2-aminobutanoate + glycine + ATP = ophthalmate + ADP + phosphate + H(+). It participates in sulfur metabolism; glutathione biosynthesis; glutathione from L-cysteine and L-glutamate: step 2/2. Functionally, catalyzes the production of glutathione from gamma-glutamylcysteine and glycine in an ATP-dependent manner. Glutathione (gamma-glutamylcysteinylglycine, GSH) is the most abundant intracellular thiol in living aerobic cells and is required for numerous processes including the protection of cells against oxidative damage, amino acid transport, the detoxification of foreign compounds, the maintenance of protein sulfhydryl groups in a reduced state and acts as a cofactor for a number of enzymes. Participates in ophthalmate biosynthesis in hepatocytes. The protein is Glutathione synthetase of Mus musculus (Mouse).